The following is a 303-amino-acid chain: Ribonuclease P protein subunit p40 (303 aa).

In terms of assembly, component of nuclear RNase P and RNase MRP ribonucleoproteins. RNase P consists of a catalytic RNA moiety and about 10 protein subunits; POP1, POP4, POP5, POP7, RPP14, RPP21, RPP25, RPP30, RPP38 and RPP40. Within the RNase P complex, POP1, POP7 and RPP25 form the 'finger' subcomplex, POP5, RPP14, RPP40 and homodimeric RPP30 form the 'palm' subcomplex, and RPP21, POP4 and RPP38 form the 'wrist' subcomplex. All subunits of the RNase P complex interact with the catalytic RNA. Several subunits of RNase P are also part of the RNase MRP complex. RNase MRP consists of a catalytic RNA moiety and about 8 protein subunits; POP1, POP7, RPP25, RPP30, RPP38, RPP40 and possibly also POP4 and POP5.

The protein resides in the nucleus. Its subcellular location is the nucleolus. In terms of biological role, component of ribonuclease P, a ribonucleoprotein complex that generates mature tRNA molecules by cleaving their 5'-ends. Also a component of the MRP ribonuclease complex, which cleaves pre-rRNA sequences. This is Ribonuclease P protein subunit p40 (RPP40) from Bos taurus (Bovine).